A 399-amino-acid chain; its full sequence is Probable peptidoglycan glycosyltransferase FtsW (399 aa).

Residues 1 to 32 (MMAGFAQTTITKINQFYERWMPRLPAEMTARN) lie on the Cytoplasmic side of the membrane. Residues 33–53 (VLVFCVVCLLCIGSVMVASAS) traverse the membrane as a helical segment. The Periplasmic portion of the chain corresponds to 54-72 (MPYAEYMHENPFHYVVRHA). A helical membrane pass occupies residues 73–93 (ISIATAAIVAYLVYKVPLNVW). At 94 to 97 (FKNT) the chain is on the cytoplasmic side. The helical transmembrane segment at 98 to 118 (FSFWLITILLLLAVLVIGTEV) threads the bilayer. The Periplasmic segment spans residues 119–126 (NGSRRWIR). A helical transmembrane segment spans residues 127 to 147 (LAGFTLQPTEVAKVMMAIFTA). Residues 148–159 (DYVVRRAKEVRT) are Cytoplasmic-facing. Residues 160–180 (HWKGLVRLSGVMAITVGLIIA) traverse the membrane as a helical segment. Residues 181–183 (EPD) lie on the Periplasmic side of the membrane. Residues 184-204 (LGATVVIVLMMVGIFFLAGAP) traverse the membrane as a helical segment. Residues 205–207 (PTQ) lie on the Cytoplasmic side of the membrane. A helical membrane pass occupies residues 208–228 (FAIMLGAVVMGIGFLILFEPY). Topologically, residues 229 to 292 (RLARAMSFTN…DFMLAVLGEE (64 aa)) are periplasmic. A helical membrane pass occupies residues 293–313 (FGFVGISIVIGLSFIMLACCI). At 314–327 (KIGHRALKHNFLRA) the chain is on the cytoplasmic side. The chain crosses the membrane as a helical span at residues 328-348 (GYLAYGISIIFLLQIIVNAGM). The Periplasmic segment spans residues 349-359 (NMGLMPTKGLT). Residues 360-380 (LPFISYGGTSLMMCAAMISLI) form a helical membrane-spanning segment. Residues 381 to 399 (LRIDASTQEINPDREESNF) lie on the Cytoplasmic side of the membrane.

Belongs to the SEDS family. FtsW subfamily.

The protein localises to the cell inner membrane. The catalysed reaction is [GlcNAc-(1-&gt;4)-Mur2Ac(oyl-L-Ala-gamma-D-Glu-L-Lys-D-Ala-D-Ala)](n)-di-trans,octa-cis-undecaprenyl diphosphate + beta-D-GlcNAc-(1-&gt;4)-Mur2Ac(oyl-L-Ala-gamma-D-Glu-L-Lys-D-Ala-D-Ala)-di-trans,octa-cis-undecaprenyl diphosphate = [GlcNAc-(1-&gt;4)-Mur2Ac(oyl-L-Ala-gamma-D-Glu-L-Lys-D-Ala-D-Ala)](n+1)-di-trans,octa-cis-undecaprenyl diphosphate + di-trans,octa-cis-undecaprenyl diphosphate + H(+). It participates in cell wall biogenesis; peptidoglycan biosynthesis. Peptidoglycan polymerase that is essential for cell division. This Acinetobacter baylyi (strain ATCC 33305 / BD413 / ADP1) protein is Probable peptidoglycan glycosyltransferase FtsW.